We begin with the raw amino-acid sequence, 276 residues long: 4-deoxy-L-threo-5-hexosulose-uronate ketol-isomerase 2 (276 aa).

His-194, His-196, Glu-201, and His-243 together coordinate Zn(2+).

Belongs to the KduI family. It depends on Zn(2+) as a cofactor.

It carries out the reaction 5-dehydro-4-deoxy-D-glucuronate = 3-deoxy-D-glycero-2,5-hexodiulosonate. It participates in glycan metabolism; pectin degradation; 2-dehydro-3-deoxy-D-gluconate from pectin: step 4/5. Functionally, catalyzes the isomerization of 5-dehydro-4-deoxy-D-glucuronate to 3-deoxy-D-glycero-2,5-hexodiulosonate. The sequence is that of 4-deoxy-L-threo-5-hexosulose-uronate ketol-isomerase 2 (kduI2) from Enterococcus faecalis (strain ATCC 700802 / V583).